Reading from the N-terminus, the 361-residue chain is MTDILSPLAYLCGKPTAKAKLKALPEHFQVNEVLGYSLTGHGEHLMVRIRKTGENTSFVANELAKACGVPSRAVSWAGLKDRHAVTEQWLSVHLPNGETPDFSAFLAQYPSIEILEVTRHDKKLRPGDLQGNEFVVTLSEVSDVAAVLSRLETVAELGVPNYFGSQRFGRHGNNLSEARRWGRDNVRSRNQNQRSLYLSAARSWIFNQIVSKRIEQGCFARFIEGDIALAEQQMFNVDGDLALWDQRLQAGEVAISAALAGDNALPTSGQALPLEQAELDAEPDLMALIRGNRMRHDRRAIALKAQNLSWQVQEDQITLRFSLDAGSFATSLVRELIEEIPVVRHYDQGHEQESRDSESED.

The Nucleophile role is filled by D81. In terms of domain architecture, TRUD spans G158 to L303.

Belongs to the pseudouridine synthase TruD family.

The enzyme catalyses uridine(13) in tRNA = pseudouridine(13) in tRNA. Functionally, responsible for synthesis of pseudouridine from uracil-13 in transfer RNAs. The protein is tRNA pseudouridine synthase D of Vibrio cholerae serotype O1 (strain ATCC 39541 / Classical Ogawa 395 / O395).